Consider the following 183-residue polypeptide: Dual-action ribosomal maturation protein DarP (183 aa).

The tract at residues 1–20 is disordered; the sequence is MKQKYEDWLNDVPDNQEDDE.

It belongs to the DarP family.

It localises to the cytoplasm. Functionally, member of a network of 50S ribosomal subunit biogenesis factors which assembles along the 30S-50S interface, preventing incorrect 23S rRNA structures from forming. Promotes peptidyl transferase center (PTC) maturation. This is Dual-action ribosomal maturation protein DarP from Pectobacterium carotovorum subsp. carotovorum (strain PC1).